A 158-amino-acid polypeptide reads, in one-letter code: MSTKAIYPGTFDPMTNGHLDIVTRAALMFDRIVLAVAASPSKKPMFSLEERVALAKEVVAHLPNVDVVGFSDLLANFAKAQQANVLVRGLRAVSDFEFEMQLAQMNRHLMDTLDSVFLMPSEQYSFISSSLMKEVARHGGDVETFLPAPVYKALKARL.

Threonine 10 lines the substrate pocket. ATP is bound by residues 10–11 and histidine 18; that span reads TF. Residues lysine 42, leucine 74, and arginine 88 each coordinate substrate. Residues 89–91, glutamate 99, and 124–130 each bind ATP; these read GLR and YSFISSS.

This sequence belongs to the bacterial CoaD family. In terms of assembly, homohexamer. Mg(2+) serves as cofactor.

Its subcellular location is the cytoplasm. The enzyme catalyses (R)-4'-phosphopantetheine + ATP + H(+) = 3'-dephospho-CoA + diphosphate. Its pathway is cofactor biosynthesis; coenzyme A biosynthesis; CoA from (R)-pantothenate: step 4/5. Functionally, reversibly transfers an adenylyl group from ATP to 4'-phosphopantetheine, yielding dephospho-CoA (dPCoA) and pyrophosphate. This Erwinia tasmaniensis (strain DSM 17950 / CFBP 7177 / CIP 109463 / NCPPB 4357 / Et1/99) protein is Phosphopantetheine adenylyltransferase.